The following is a 46-amino-acid chain: Esculentin-1GRa (46 aa).

Expressed by the skin glands.

It is found in the secreted. Functionally, antimicrobial peptide active against the Gram-positive bacterium S.aureus (MIC=12.5 uM) and against the Gram-negative bacterium E.coli (MIC=6 uM). Has no antifungal activity against C.albicans. Shows hemolytic activity against human erythrocytes only at high concentrations (LC(50)=210 uM). The polypeptide is Esculentin-1GRa (Odorrana grahami (Yunnanfu frog)).